We begin with the raw amino-acid sequence, 535 residues long: Heat shock factor protein 2 (535 aa).

Residues Lys-2, Lys-82, Lys-135, Lys-139, Lys-151, Lys-210, Lys-218, and Lys-237 each participate in a glycyl lysine isopeptide (Lys-Gly) (interchain with G-Cter in SUMO2) cross-link. The DNA-binding element occupies 7–112 (VPAFLSKLWT…LLENIKRKVS (106 aa)). Positions 119–192 (NKIRQEDLTK…VTLVQNNQLV (74 aa)) are hydrophobic repeat HR-A/B. Residues 298-325 (QSGEQSEPAREPLRVGSAGSSSPLMSSA) form a disordered region. Positions 313–325 (GSAGSSSPLMSSA) are enriched in low complexity. Residues 359–384 (LLDYLDSIDCSLEDFQAMLSGRQFSI) form a hydrophobic repeat HR-C region. Residues 418–437 (TKSSVVQHVSEEGRKSKSKP) are disordered. The span at 426–437 (VSEEGRKSKSKP) shows a compositional bias: basic and acidic residues.

Belongs to the HSF family. DNA-binding homotrimer in stressed or heat shocked cells, otherwise found as a homodimer. As to expression, isoform alpha is expressed predominantly in testis while isoform beta is expressed predominantly in heart and brain.

The protein localises to the cytoplasm. Its subcellular location is the nucleus. DNA-binding protein that specifically binds heat shock promoter elements (HSE) and activates transcription. In higher eukaryotes, HSF is unable to bind to the HSE unless the cells are heat shocked. HSF2 is expressed in a form that binds DNA constitutively but loses DNA binding by incubation at greater than 41 degrees C. This chain is Heat shock factor protein 2 (Hsf2), found in Mus musculus (Mouse).